The chain runs to 101 residues: Small ribosomal subunit protein uS14 (101 aa).

The interval 52 to 72 (PRDSSPVRQRRRCRSTGRPRG) is disordered. The segment covering 59–72 (RQRRRCRSTGRPRG) has biased composition (basic residues).

This sequence belongs to the universal ribosomal protein uS14 family. Part of the 30S ribosomal subunit. Contacts proteins S3 and S10.

Binds 16S rRNA, required for the assembly of 30S particles and may also be responsible for determining the conformation of the 16S rRNA at the A site. The chain is Small ribosomal subunit protein uS14 from Nitrosococcus oceani (strain ATCC 19707 / BCRC 17464 / JCM 30415 / NCIMB 11848 / C-107).